A 288-amino-acid polypeptide reads, in one-letter code: 33 kDa chaperonin (288 aa).

2 disulfides stabilise this stretch: Cys233-Cys235 and Cys267-Cys270.

This sequence belongs to the HSP33 family. Under oxidizing conditions two disulfide bonds are formed involving the reactive cysteines. Under reducing conditions zinc is bound to the reactive cysteines and the protein is inactive.

The protein resides in the cytoplasm. Redox regulated molecular chaperone. Protects both thermally unfolding and oxidatively damaged proteins from irreversible aggregation. Plays an important role in the bacterial defense system toward oxidative stress. This Actinobacillus succinogenes (strain ATCC 55618 / DSM 22257 / CCUG 43843 / 130Z) protein is 33 kDa chaperonin.